An 87-amino-acid chain; its full sequence is Large ribosomal subunit protein bL27 (87 aa).

The protein belongs to the bacterial ribosomal protein bL27 family.

The chain is Large ribosomal subunit protein bL27 from Wigglesworthia glossinidia brevipalpis.